A 476-amino-acid polypeptide reads, in one-letter code: Protein DETOXIFICATION 3 (476 aa).

12 helical membrane passes run Ala35–Val55, Gly66–Ala86, Ile117–Leu137, Val146–Pro166, Leu185–Gly205, Gly208–Val228, Ala260–Leu280, Val289–Ala309, Val331–Thr351, Val370–Leu390, Ile402–Leu422, and Leu433–Ala453.

Belongs to the multi antimicrobial extrusion (MATE) (TC 2.A.66.1) family.

The protein resides in the membrane. This is Protein DETOXIFICATION 3 from Arabidopsis thaliana (Mouse-ear cress).